The sequence spans 443 residues: tRNA modification GTPase MnmE (443 aa).

3 residues coordinate (6S)-5-formyl-5,6,7,8-tetrahydrofolate: Arg-19, Glu-78, and Lys-118. The region spanning 214 to 366 (GFKIAIIGPT…LISKIKNKLK (153 aa)) is the TrmE-type G domain. Asn-224 is a K(+) binding site. GTP is bound by residues 224-229 (NAGKSS), 243-249 (SEIAGTT), and 268-271 (DTAG). Ser-228 provides a ligand contact to Mg(2+). K(+) is bound by residues Ser-243, Ile-245, and Thr-248. Residue Thr-249 coordinates Mg(2+). Lys-443 lines the (6S)-5-formyl-5,6,7,8-tetrahydrofolate pocket.

This sequence belongs to the TRAFAC class TrmE-Era-EngA-EngB-Septin-like GTPase superfamily. TrmE GTPase family. As to quaternary structure, homodimer. Heterotetramer of two MnmE and two MnmG subunits. K(+) serves as cofactor.

It is found in the cytoplasm. Functionally, exhibits a very high intrinsic GTPase hydrolysis rate. Involved in the addition of a carboxymethylaminomethyl (cmnm) group at the wobble position (U34) of certain tRNAs, forming tRNA-cmnm(5)s(2)U34. This chain is tRNA modification GTPase MnmE, found in Pelagibacter ubique (strain HTCC1062).